A 220-amino-acid chain; its full sequence is 7-carboxy-7-deazaguanine synthase (220 aa).

Residues 16–18 and arginine 31 contribute to the substrate site; that span reads IQG. The 194-residue stretch at 22–215 folds into the Radical SAM core domain; it reads FAGWPCAFVR…LQLHKYIWNP (194 aa). Cysteine 35, cysteine 39, and cysteine 42 together coordinate [4Fe-4S] cluster. A Mg(2+)-binding site is contributed by threonine 44. Threonine 74 is a binding site for substrate. Position 76 (glycine 76) interacts with S-adenosyl-L-methionine.

The protein belongs to the radical SAM superfamily. 7-carboxy-7-deazaguanine synthase family. In terms of assembly, homodimer. It depends on [4Fe-4S] cluster as a cofactor. Requires S-adenosyl-L-methionine as cofactor. Mg(2+) serves as cofactor.

It carries out the reaction 6-carboxy-5,6,7,8-tetrahydropterin + H(+) = 7-carboxy-7-deazaguanine + NH4(+). The protein operates within purine metabolism; 7-cyano-7-deazaguanine biosynthesis. Its function is as follows. Catalyzes the complex heterocyclic radical-mediated conversion of 6-carboxy-5,6,7,8-tetrahydropterin (CPH4) to 7-carboxy-7-deazaguanine (CDG), a step common to the biosynthetic pathways of all 7-deazapurine-containing compounds. This chain is 7-carboxy-7-deazaguanine synthase, found in Chlorobaculum tepidum (strain ATCC 49652 / DSM 12025 / NBRC 103806 / TLS) (Chlorobium tepidum).